The primary structure comprises 204 residues: ATP synthase subunit b 2 (204 aa).

Residues 50 to 70 (IFWLAVTFGLLLFLMSKVALP) form a helical membrane-spanning segment.

Belongs to the ATPase B chain family. F-type ATPases have 2 components, F(1) - the catalytic core - and F(0) - the membrane proton channel. F(1) has five subunits: alpha(3), beta(3), gamma(1), delta(1), epsilon(1). F(0) has three main subunits: a(1), b(2) and c(10-14). The alpha and beta chains form an alternating ring which encloses part of the gamma chain. F(1) is attached to F(0) by a central stalk formed by the gamma and epsilon chains, while a peripheral stalk is formed by the delta and b chains.

It is found in the cell inner membrane. In terms of biological role, f(1)F(0) ATP synthase produces ATP from ADP in the presence of a proton or sodium gradient. F-type ATPases consist of two structural domains, F(1) containing the extramembraneous catalytic core and F(0) containing the membrane proton channel, linked together by a central stalk and a peripheral stalk. During catalysis, ATP synthesis in the catalytic domain of F(1) is coupled via a rotary mechanism of the central stalk subunits to proton translocation. Its function is as follows. Component of the F(0) channel, it forms part of the peripheral stalk, linking F(1) to F(0). The b'-subunit is a diverged and duplicated form of b found in plants and photosynthetic bacteria. The polypeptide is ATP synthase subunit b 2 (atpF2) (Rhodospirillum centenum (strain ATCC 51521 / SW)).